We begin with the raw amino-acid sequence, 466 residues long: Acetylornithine aminotransferase, mitochondrial (466 aa).

Residue Lys-308 is modified to N6-(pyridoxal phosphate)lysine.

This sequence belongs to the class-III pyridoxal-phosphate-dependent aminotransferase family. Pyridoxal 5'-phosphate serves as cofactor.

The protein localises to the mitochondrion matrix. It carries out the reaction N(2)-acetyl-L-ornithine + 2-oxoglutarate = N-acetyl-L-glutamate 5-semialdehyde + L-glutamate. The protein operates within amino-acid biosynthesis; L-arginine biosynthesis; N(2)-acetyl-L-ornithine from L-glutamate: step 4/4. This chain is Acetylornithine aminotransferase, mitochondrial (ARG8), found in Debaryomyces hansenii (strain ATCC 36239 / CBS 767 / BCRC 21394 / JCM 1990 / NBRC 0083 / IGC 2968) (Yeast).